A 474-amino-acid chain; its full sequence is Phenylalanine--tRNA ligase alpha subunit (474 aa).

Residues threonine 317, 356–358 (QLE), and tyrosine 396 each bind L-phenylalanine. Glutamate 398 provides a ligand contact to Mg(2+). Phenylalanine 421 serves as a coordination point for L-phenylalanine.

Belongs to the class-II aminoacyl-tRNA synthetase family. Phe-tRNA synthetase alpha subunit type 2 subfamily. Tetramer of two alpha and two beta subunits. Mg(2+) serves as cofactor.

Its subcellular location is the cytoplasm. The catalysed reaction is tRNA(Phe) + L-phenylalanine + ATP = L-phenylalanyl-tRNA(Phe) + AMP + diphosphate + H(+). This chain is Phenylalanine--tRNA ligase alpha subunit, found in Methanocorpusculum labreanum (strain ATCC 43576 / DSM 4855 / Z).